The following is a 322-amino-acid chain: DNA repair and recombination protein RadA (322 aa).

Position 105–112 (105–112 (GMFGSGKT)) interacts with ATP.

Belongs to the eukaryotic RecA-like protein family.

Functionally, involved in DNA repair and in homologous recombination. Binds and assemble on single-stranded DNA to form a nucleoprotein filament. Hydrolyzes ATP in a ssDNA-dependent manner and promotes DNA strand exchange between homologous DNA molecules. The sequence is that of DNA repair and recombination protein RadA from Methanococcus maripaludis (Methanococcus deltae).